Here is an 89-residue protein sequence, read N- to C-terminus: Large ribosomal subunit protein bL28 (89 aa).

This sequence belongs to the bacterial ribosomal protein bL28 family.

The protein is Large ribosomal subunit protein bL28 of Chlamydia caviae (strain ATCC VR-813 / DSM 19441 / 03DC25 / GPIC) (Chlamydophila caviae).